The following is a 139-amino-acid chain: Acidic phospholipase A2 4 (139 aa).

The first 16 residues, 1–16 (MRTLWIVAVWLVGVEG), serve as a signal peptide directing secretion. Cystine bridges form between Cys-42-Cys-131, Cys-44-Cys-60, Cys-59-Cys-111, Cys-65-Cys-139, Cys-66-Cys-104, Cys-73-Cys-97, and Cys-91-Cys-102. Ca(2+) is bound by residues Tyr-43, Gly-45, and Gly-47. His-63 is a catalytic residue. Position 64 (Asp-64) interacts with Ca(2+). Asp-105 is an active-site residue.

Belongs to the phospholipase A2 family. Group II subfamily. D49 sub-subfamily. Ca(2+) is required as a cofactor. In terms of tissue distribution, expressed by the venom gland.

The protein resides in the secreted. It carries out the reaction a 1,2-diacyl-sn-glycero-3-phosphocholine + H2O = a 1-acyl-sn-glycero-3-phosphocholine + a fatty acid + H(+). Functionally, PLA2 catalyzes the calcium-dependent hydrolysis of the 2-acyl groups in 3-sn-phosphoglycerides. This chain is Acidic phospholipase A2 4, found in Echis carinatus sochureki (Saw-scaled viper).